Consider the following 451-residue polypeptide: MATVAFHTLGCKVNHYETEAIWQLFKEAGYERRDFEQTADVYVINTCTVTNTGDKKSRQVIRRAIRQNPDGVICVTGCYAQTSPAEIMAIPGVDIVVGTQDREKMLGYIDQYREERQPINGVSNIMKARVYEELDVPAFTDRTRASLKIQEGCNNFCTFCIIPWARGLLRSRDPEEVIKQAQQLVDAGYKEIVLTGIHTGGYGEDMKDYNFAKLLSELDTRVEGVKRIRISSIEASQITDEVIEVLDRSDKIVNHLHIPIQSGSNTVLKRMRRKYTMEFFADRLNKLKKALPGLAVTSDVIVGFPGETEEEFMETYNFIKEHKFSELHVFPYSKRTGTPAARMEDQVDENVKNERVHRLIALSDQLAKEYASQYENEVLEIIPEEAFKETEEENMFVGYTDNYMKVVFKGTEDMIGKIVKVKILKAGYPYNEGQFVRVVEDEITEHMRLSS.

One can recognise an MTTase N-terminal domain in the interval 2-114 (ATVAFHTLGC…MLGYIDQYRE (113 aa)). Cysteine 11, cysteine 47, cysteine 78, cysteine 153, cysteine 157, and cysteine 160 together coordinate [4Fe-4S] cluster. Positions 139–369 (FTDRTRASLK…IALSDQLAKE (231 aa)) constitute a Radical SAM core domain. Residues 372–437 (SQYENEVLEI…YPYNEGQFVR (66 aa)) enclose the TRAM domain.

This sequence belongs to the methylthiotransferase family. MtaB subfamily. The cofactor is [4Fe-4S] cluster.

Its subcellular location is the cytoplasm. It catalyses the reaction N(6)-L-threonylcarbamoyladenosine(37) in tRNA + (sulfur carrier)-SH + AH2 + 2 S-adenosyl-L-methionine = 2-methylsulfanyl-N(6)-L-threonylcarbamoyladenosine(37) in tRNA + (sulfur carrier)-H + 5'-deoxyadenosine + L-methionine + A + S-adenosyl-L-homocysteine + 2 H(+). Its function is as follows. Catalyzes the methylthiolation of N6-threonylcarbamoyladenosine (t(6)A), leading to the formation of 2-methylthio-N6-threonylcarbamoyladenosine (ms(2)t(6)A) at position 37 in tRNAs that read codons beginning with adenine. The chain is Threonylcarbamoyladenosine tRNA methylthiotransferase MtaB (mtaB) from Bacillus subtilis (strain 168).